A 947-amino-acid chain; its full sequence is Protein translocase subunit SecA (947 aa).

Residues Q87, 105 to 109 (GEGKT), and D525 each bind ATP. A disordered region spans residues 905–928 (PADNADKTARNPNDPSTWGKVGRN). Residues C931, C933, C942, and H943 each contribute to the Zn(2+) site.

The protein belongs to the SecA family. Monomer and homodimer. Part of the essential Sec protein translocation apparatus which comprises SecA, SecYEG and auxiliary proteins SecDF-YajC and YidC. The cofactor is Zn(2+).

The protein localises to the cell inner membrane. It localises to the cytoplasm. The catalysed reaction is ATP + H2O + cellular proteinSide 1 = ADP + phosphate + cellular proteinSide 2.. In terms of biological role, part of the Sec protein translocase complex. Interacts with the SecYEG preprotein conducting channel. Has a central role in coupling the hydrolysis of ATP to the transfer of proteins into and across the cell membrane, serving both as a receptor for the preprotein-SecB complex and as an ATP-driven molecular motor driving the stepwise translocation of polypeptide chains across the membrane. This chain is Protein translocase subunit SecA, found in Rhodopseudomonas palustris (strain BisB18).